The chain runs to 273 residues: 1,4-dihydroxy-2-naphthoyl-CoA synthase (273 aa).

Substrate-binding positions include R34, 73 to 77 (SGGDQ), Y85, 117 to 121 (YAVGG), T143, S149, Y246, and K261. A hydrogencarbonate-binding site is contributed by 142 to 144 (QTG). Over residues 254-265 (GRDAFKEKRDPD) the composition is skewed to basic and acidic residues. The disordered stretch occupies residues 254–273 (GRDAFKEKRDPDFDQFPKFP).

The protein belongs to the enoyl-CoA hydratase/isomerase family. MenB subfamily. It depends on hydrogencarbonate as a cofactor.

It carries out the reaction 2-succinylbenzoyl-CoA + H(+) = 1,4-dihydroxy-2-naphthoyl-CoA + H2O. It participates in quinol/quinone metabolism; 1,4-dihydroxy-2-naphthoate biosynthesis; 1,4-dihydroxy-2-naphthoate from chorismate: step 6/7. Its pathway is quinol/quinone metabolism; menaquinone biosynthesis. In terms of biological role, converts o-succinylbenzoyl-CoA (OSB-CoA) to 1,4-dihydroxy-2-naphthoyl-CoA (DHNA-CoA). This Staphylococcus aureus (strain Mu50 / ATCC 700699) protein is 1,4-dihydroxy-2-naphthoyl-CoA synthase.